Consider the following 359-residue polypeptide: Alpha-N-acetylneuraminide alpha-2,8-sialyltransferase (359 aa).

The Cytoplasmic segment spans residues 1–28 (MWGRWRGAGGRRGVAQPVIPQMKLLGGR). The helical; Signal-anchor for type II membrane protein transmembrane segment at 29–49 (VPLGASALGLLIVCWFYIFPG) threads the bilayer. Over 50–359 (GERLPGHKEM…KKDVSSKKPH (310 aa)) the chain is Lumenal. N73 and N121 each carry an N-linked (GlcNAc...) asparagine glycan. 2 cysteine pairs are disulfide-bonded: C140/C289 and C154/C349. The CMP-N-acetyl-beta-neuraminate site is built by N145 and N168. N247 carries N-linked (GlcNAc...) asparagine glycosylation. Residues S276, T277, G278, W298, and H312 each contribute to the CMP-N-acetyl-beta-neuraminate site. The active-site Proton donor/acceptor is the H324.

It belongs to the glycosyltransferase 29 family. In terms of tissue distribution, expressed in the dorsal blastopore lip and in the presumptive neuroectoderm in stage 11 embryos. During gastrulation, strongly expressed in the involuting mesoderm. At stages 13 and 16, expressed in the neural plate and neural fold, paraxial mesoderm and notochord. At stages 19 and 22 (neural tube and early tailbud), strongly expressed in the neural tube and notochord. At the tadpole stage, expressed in the head region, branchial arches and otic and optic primordia. Also localized in the notochord and weakly expressed in the somites. In adults, expressed in the brain and ovary. Isoform 2 (short) is expressed at a low level in the adult testis and muscle, and at a high level in the skin. Isoform 1 (long) is expressed at a high level in the adult lung and kidney. Both isoforms 1 and 2 are expressed in the gut and liver.

Its subcellular location is the golgi apparatus membrane. It catalyses the reaction an N-acetyl-alpha-neuraminyl-(2-&gt;3)-beta-D-galactosyl derivative + CMP-N-acetyl-beta-neuraminate = an N-acetyl-alpha-neuraminyl-(2-&gt;8)-N-acetyl-alpha-neuraminyl-(2-&gt;3)-beta-D-galactosyl derivative + CMP + H(+). The catalysed reaction is a ganglioside GM3 (d18:1(4E)) + CMP-N-acetyl-beta-neuraminate = a ganglioside GD3 (d18:1(4E)) + CMP + H(+). The enzyme catalyses a ganglioside GD3 (d18:1(4E)) + CMP-N-acetyl-beta-neuraminate = a ganglioside GT3 (d18:1(4E)) + CMP + H(+). It carries out the reaction a ganglioside GD1a (d18:1(4E)) + CMP-N-acetyl-beta-neuraminate = a ganglioside GT1a (d18:1(4E)) + CMP + H(+). It catalyses the reaction a ganglioside GT1b (d18:1(4E)) + CMP-N-acetyl-beta-neuraminate = a ganglioside GQ1b (d18:1(4E)) + CMP + H(+). The catalysed reaction is a ganglioside GM1b (d18:1(4E)) + CMP-N-acetyl-beta-neuraminate = a ganglioside GD1c (d18:1(4E)) + CMP + H(+). The enzyme catalyses a ganglioside GD3 + CMP-N-acetyl-beta-neuraminate = a ganglioside GT3 + CMP + H(+). It carries out the reaction [alpha-N-acetylneuraminyl-(2-&gt;8)](n)-alpha-N-acetylneuraminyl-(2-&gt;8)-alpha-N-acetylneuraminyl-(2-&gt;3)-beta-D-galactosyl-(1-&gt;4)-beta-D-glucosyl-(1&lt;-&gt;1)-ceramide + CMP-N-acetyl-beta-neuraminate = [alpha-N-acetylneuraminyl-(2-&gt;8)](n+1)-alpha-N-acetylneuraminyl-(2-&gt;8)-alpha-N-acetylneuraminyl-(2-&gt;3)-beta-D-galactosyl-(1-&gt;4)-beta-D-glucosyl-(1&lt;-&gt;1)-ceramide + CMP + H(+). It functions in the pathway protein modification; protein glycosylation. Its pathway is lipid metabolism; sphingolipid metabolism. In terms of biological role, catalyzes the addition of sialic acid in alpha 2,8-linkage to the sialic acid moiety of the ganglioside GM3 to form ganglioside GD3; gangliosides are a subfamily of complex glycosphingolipds that contain one or more residues of sialic acid. Glycosphingolipids are required for convergence extension movements during early development. Can catalyze the addition of a second alpha-2,8- sialic acid to GD3 to form GT3. Can use GM1b, GD1a and GT1b as acceptor substrates to synthesize GD1c, GT1a and GQ1b respectively. The sequence is that of Alpha-N-acetylneuraminide alpha-2,8-sialyltransferase from Xenopus laevis (African clawed frog).